Consider the following 424-residue polypeptide: Tyrosine--tRNA ligase (424 aa).

Tyrosine 37 contacts L-tyrosine. The 'HIGH' region signature appears at 42–51 (PTADSLHLGH). L-tyrosine contacts are provided by tyrosine 175 and glutamine 179. The short motif at 235-239 (KFGKT) is the 'KMSKS' region element. Lysine 238 lines the ATP pocket. The 58-residue stretch at 357-414 (ADLQQALVNAELVPSRGQARTMIGSNAVTINGEKQSNAEYNFSDADRLFGRYTLLRRG) folds into the S4 RNA-binding domain.

It belongs to the class-I aminoacyl-tRNA synthetase family. TyrS type 1 subfamily. In terms of assembly, homodimer.

The protein localises to the cytoplasm. The enzyme catalyses tRNA(Tyr) + L-tyrosine + ATP = L-tyrosyl-tRNA(Tyr) + AMP + diphosphate + H(+). In terms of biological role, catalyzes the attachment of tyrosine to tRNA(Tyr) in a two-step reaction: tyrosine is first activated by ATP to form Tyr-AMP and then transferred to the acceptor end of tRNA(Tyr). This chain is Tyrosine--tRNA ligase, found in Serratia proteamaculans (strain 568).